We begin with the raw amino-acid sequence, 421 residues long: Forkhead box protein fkh-3 (421 aa).

The fork-head DNA-binding region spans 118 to 218; sequence RPPISYVALC…SDADFDFFRK (101 aa).

Its subcellular location is the nucleus. In terms of biological role, transcription factor. Binds to DNA sequence motif 5'-CTGTTTCA-3'. Regulates expression of a class of small RNAs, known as 21U-RNAs, perhaps acting redundantly with fkh-4 and fkh-5. This Caenorhabditis elegans protein is Forkhead box protein fkh-3.